The primary structure comprises 299 residues: Oxygen-dependent coproporphyrinogen-III oxidase (299 aa).

A substrate-binding site is contributed by Ser-92. The Mn(2+) site is built by His-96 and His-106. The active-site Proton donor is the His-106. 108–110 contacts substrate; that stretch reads NVR. Residues His-145 and His-175 each coordinate Mn(2+). Positions 240-275 are important for dimerization; the sequence is YVEFNLVWDRGTLFGLQTGGRTESILMSMPPLVRWE. Residue 258-260 coordinates substrate; the sequence is GGR.

It belongs to the aerobic coproporphyrinogen-III oxidase family. Homodimer. Mn(2+) is required as a cofactor.

It is found in the cytoplasm. It carries out the reaction coproporphyrinogen III + O2 + 2 H(+) = protoporphyrinogen IX + 2 CO2 + 2 H2O. Its pathway is porphyrin-containing compound metabolism; protoporphyrin-IX biosynthesis; protoporphyrinogen-IX from coproporphyrinogen-III (O2 route): step 1/1. Functionally, involved in the heme biosynthesis. Catalyzes the aerobic oxidative decarboxylation of propionate groups of rings A and B of coproporphyrinogen-III to yield the vinyl groups in protoporphyrinogen-IX. This is Oxygen-dependent coproporphyrinogen-III oxidase from Escherichia coli (strain K12 / MC4100 / BW2952).